The chain runs to 499 residues: Probable malate:quinone oxidoreductase 4 (499 aa).

This sequence belongs to the MQO family. FAD serves as cofactor.

The catalysed reaction is (S)-malate + a quinone = a quinol + oxaloacetate. The protein operates within carbohydrate metabolism; tricarboxylic acid cycle; oxaloacetate from (S)-malate (quinone route): step 1/1. In Staphylococcus epidermidis (strain ATCC 35984 / DSM 28319 / BCRC 17069 / CCUG 31568 / BM 3577 / RP62A), this protein is Probable malate:quinone oxidoreductase 4.